Consider the following 172-residue polypeptide: Adenine phosphoribosyltransferase (172 aa).

Belongs to the purine/pyrimidine phosphoribosyltransferase family. As to quaternary structure, homodimer.

It is found in the cytoplasm. It catalyses the reaction AMP + diphosphate = 5-phospho-alpha-D-ribose 1-diphosphate + adenine. It functions in the pathway purine metabolism; AMP biosynthesis via salvage pathway; AMP from adenine: step 1/1. Functionally, catalyzes a salvage reaction resulting in the formation of AMP, that is energically less costly than de novo synthesis. This chain is Adenine phosphoribosyltransferase, found in Pelobacter propionicus (strain DSM 2379 / NBRC 103807 / OttBd1).